The chain runs to 81 residues: Antitoxin VapB28 (81 aa).

Its function is as follows. Antitoxin component of a type II toxin-antitoxin (TA) system. This chain is Antitoxin VapB28 (vapB28), found in Mycobacterium tuberculosis (strain CDC 1551 / Oshkosh).